The following is a 178-amino-acid chain: Fatty-acid and retinol-binding protein 1 (178 aa).

The signal sequence occupies residues 1-16 (MYHRLILLALVGTTMA). Coiled coils occupy residues 67 to 89 (DAALEALKDKSDKLYKNAVELRN) and 130 to 153 (KQAARDIIAKYQALSEETKEELKV).

It belongs to the fatty-acid and retinol-binding protein (FARBP) family. Not glycosylated.

Its subcellular location is the secreted. Binds retinol and different fatty acids. The sequence is that of Fatty-acid and retinol-binding protein 1 from Brugia pahangi (Filarial nematode worm).